The following is a 492-amino-acid chain: GPI alpha-1,6-mannosyltransferase 2 (492 aa).

Over 1 to 13 (MGLLDPSQKEVLK) the chain is Cytoplasmic. The helical transmembrane segment at 14–34 (FAVSCRILTLVLQALFNIIIP) threads the bilayer. The Lumenal segment spans residues 35–77 (DHHADAFSPPRLAPSGSVDQLVEALLGGLSRWDAEHFLFIAEH). Residues 78 to 98 (GYLYEHNFAFFPGFPLALLMG) form a helical membrane-spanning segment. Residues 99–113 (TELLRPLQGLLSERS) are Cytoplasmic-facing. A helical membrane pass occupies residues 114-134 (CLLVSVALLNSLFSVLAAVAL). Residues 135–136 (HD) lie on the Lumenal side of the membrane. A helical membrane pass occupies residues 137 to 157 (LGCLVLHCPRQAFCAALLFCL). Over 158-161 (SPAN) the chain is Cytoplasmic. A helical membrane pass occupies residues 162 to 182 (VFLAAGYSEALFAFLTFSAMG). Over 183–192 (QLERGRGWAS) the chain is Lumenal. A helical transmembrane segment spans residues 193 to 213 (GLLFALAAGVRSNGLVSVGFL). Residues 214-234 (LHSQCRGFCSSLVVLDPLKGL) are Cytoplasmic-facing. The helical transmembrane segment at 235 to 255 (VKLMASLCLSVLTVSLPFALF) threads the bilayer. At 256–327 (QYYAYTQFCF…RYYELRQVPN (72 aa)) the chain is on the lumenal side. The chain crosses the membrane as a helical span at residues 328–348 (FLLATPVTVLVVWATWTYVTA). The Cytoplasmic segment spans residues 349-378 (HPWLCLTLGLQRTKDRESLEKPHPGFLSAK). The chain crosses the membrane as a helical span at residues 379 to 399 (VFVYLVHAAALLAFGGLCMHV). Residues 400–468 (QVLTRLLGSS…NWKTCSPVTK (69 aa)) lie on the Lumenal side of the membrane. A helical transmembrane segment spans residues 469–489 (CILVYFLTYWLLGLIMHCNFL). The Cytoplasmic segment spans residues 490 to 492 (PWT).

It belongs to the PIGV family. Post-translationally, not N-glycosylated.

Its subcellular location is the endoplasmic reticulum membrane. Its pathway is glycolipid biosynthesis; glycosylphosphatidylinositol-anchor biosynthesis. Its function is as follows. Alpha-1,6-mannosyltransferase that catalyzes the transfer of the second mannose, via an alpha-1,6 bond, from a dolichol-phosphate-mannose (Dol-P-Man) to the alpha-D-Man-(1-&gt;4)-alpha-D-GlcN-(1-&gt;6)-(1-radyl,2-acyl-sn-glycero-3-phospho)-2-acyl-inositol (also termed H2) intermediate to generate an alpha-D-Man-(1-&gt;6)-alpha-D-Man-(1-&gt;4)-alpha-D-GlcN-(1-&gt;6)-(1-radyl,2-acyl-sn-glycero-3-phospho)-2-acyl-inositol (also termed H3) and participates in the seventh step of the glycosylphosphatidylinositol-anchor biosynthesis. Also transfers the second mannose on a 2-PEtn-alpha-D-Man-(1-&gt;4)-alpha-D-GlcN-(1-&gt;6)-(1-radyl,2-acyl-sn-glycero-3-phospho)-2-acyl-inositol (also termed H5). This chain is GPI alpha-1,6-mannosyltransferase 2, found in Rattus norvegicus (Rat).